Here is a 191-residue protein sequence, read N- to C-terminus: Shikimate kinase (191 aa).

24 to 29 serves as a coordination point for ATP; it reads GSGKTS. Residue Thr-28 coordinates Mg(2+). Positions 46, 70, and 92 each coordinate substrate. Arg-130 is an ATP binding site. Arg-149 is a binding site for substrate.

It belongs to the shikimate kinase family. Monomer. The cofactor is Mg(2+).

The protein localises to the cytoplasm. The enzyme catalyses shikimate + ATP = 3-phosphoshikimate + ADP + H(+). It participates in metabolic intermediate biosynthesis; chorismate biosynthesis; chorismate from D-erythrose 4-phosphate and phosphoenolpyruvate: step 5/7. Functionally, catalyzes the specific phosphorylation of the 3-hydroxyl group of shikimic acid using ATP as a cosubstrate. The protein is Shikimate kinase of Synechococcus sp. (strain CC9902).